A 175-amino-acid chain; its full sequence is Outer membrane protein assembly factor BamE (175 aa).

The first 21 residues, 1–21 (MQNTKLLLTSFTFVGLLALAG), serve as a signal peptide directing secretion. A lipid anchor (N-palmitoyl cysteine) is attached at cysteine 22. Residue cysteine 22 is the site of S-diacylglycerol cysteine attachment. Disordered regions lie at residues 117-147 (ALLGKDSGTNVTAPAQEAEKPKSEVPAKPGS) and 156-175 (IDNVETVPVPTPEPLDTSPQ).

It belongs to the BamE family. As to quaternary structure, part of the Bam complex.

The protein resides in the cell outer membrane. Part of the outer membrane protein assembly complex, which is involved in assembly and insertion of beta-barrel proteins into the outer membrane. May have a structural role in maintaining the cell envelope integrity. The protein is Outer membrane protein assembly factor BamE of Pseudomonas fluorescens.